The primary structure comprises 93 residues: Small ribosomal subunit protein uS19 (93 aa).

The protein belongs to the universal ribosomal protein uS19 family.

Protein S19 forms a complex with S13 that binds strongly to the 16S ribosomal RNA. This chain is Small ribosomal subunit protein uS19, found in Oleidesulfovibrio alaskensis (strain ATCC BAA-1058 / DSM 17464 / G20) (Desulfovibrio alaskensis).